The following is a 394-amino-acid chain: T-cell acute lymphocytic leukemia protein 1 (394 aa).

The segment covering 1 to 17 (MSLKMMERLSTDMDGTR) has biased composition (basic and acidic residues). The tract at residues 1–49 (MSLKMMERLSTDMDGTRDVASPPARQDAAEPERTVELSGVKEGAAPNSP) is disordered. 7 repeat units span residues 83–89 (TELCRAT), 94–100 (TELCRAP), 105–111 (TELCRAP), 116–122 (TELCRAP), 127–133 (TELCRPP), 149–155 (SELCRAP), and 167–173 (TELCRPP). The 7 X 7 AA approximate repeats of [TS]-E-L-C-R-[AP]-P stretch occupies residues 83 to 173 (TELCRATLTP…TATTELCRPP (91 aa)). The 53-residue stretch at 262 to 314 (VRRIFTNSRERWRQQNVNGAFAELRKLIPTHPPDKKLSKNEILRLAMKYINFL) folds into the bHLH domain. A disordered region spans residues 347-394 (LSPNSSCGSSLDGAPSPDSYSEEHDALDSKHSRNLHQAMLPIDGSGQR). Over residues 367–377 (SEEHDALDSKH) the composition is skewed to basic and acidic residues.

As to expression, first expressed in patches on the ventral side of the embryo in a region that will give rise to hematopoietic tissue. By late neurula stages, expressed throughout the ventral blood island region. By tailbud stages, expression extends to probable vascular progenitor cells, but is excluded from the presumptive liver anlage. Also expressed in the central nervous system at the tailbud stage.

It localises to the nucleus. Transcription factor that acts synergistically with lmo2 and gata1 to specify embryonic dorsal mesoderm to a hematopoietic fate. The chain is T-cell acute lymphocytic leukemia protein 1 from Xenopus laevis (African clawed frog).